A 441-amino-acid chain; its full sequence is Enolase (441 aa).

Position 164 (Gln164) interacts with (2R)-2-phosphoglycerate. Glu206 acts as the Proton donor in catalysis. Residues Asp243, Glu289, and Asp316 each coordinate Mg(2+). (2R)-2-phosphoglycerate contacts are provided by Lys341, Arg370, Ser371, and Lys392. Lys341 acts as the Proton acceptor in catalysis.

The protein belongs to the enolase family. Mg(2+) serves as cofactor.

The protein localises to the cytoplasm. The protein resides in the secreted. Its subcellular location is the cell surface. It carries out the reaction (2R)-2-phosphoglycerate = phosphoenolpyruvate + H2O. It functions in the pathway carbohydrate degradation; glycolysis; pyruvate from D-glyceraldehyde 3-phosphate: step 4/5. Functionally, catalyzes the reversible conversion of 2-phosphoglycerate (2-PG) into phosphoenolpyruvate (PEP). It is essential for the degradation of carbohydrates via glycolysis. The polypeptide is Enolase (Leuconostoc citreum (strain KM20)).